The sequence spans 336 residues: Ferredoxin--NADP reductase (336 aa).

FAD is bound by residues threonine 18, glutamate 37, glutamine 45, tyrosine 50, valine 92, phenylalanine 127, aspartate 290, and serine 331.

The protein belongs to the ferredoxin--NADP reductase type 2 family. As to quaternary structure, homodimer. It depends on FAD as a cofactor.

It catalyses the reaction 2 reduced [2Fe-2S]-[ferredoxin] + NADP(+) + H(+) = 2 oxidized [2Fe-2S]-[ferredoxin] + NADPH. The polypeptide is Ferredoxin--NADP reductase (Symbiobacterium thermophilum (strain DSM 24528 / JCM 14929 / IAM 14863 / T)).